Reading from the N-terminus, the 208-residue chain is Ribosomal RNA large subunit methyltransferase E (208 aa).

S-adenosyl-L-methionine is bound by residues Gly-63, Trp-65, Asp-83, Asp-99, and Asp-124. The active-site Proton acceptor is Lys-164.

It belongs to the class I-like SAM-binding methyltransferase superfamily. RNA methyltransferase RlmE family.

It is found in the cytoplasm. The catalysed reaction is uridine(2552) in 23S rRNA + S-adenosyl-L-methionine = 2'-O-methyluridine(2552) in 23S rRNA + S-adenosyl-L-homocysteine + H(+). In terms of biological role, specifically methylates the uridine in position 2552 of 23S rRNA at the 2'-O position of the ribose in the fully assembled 50S ribosomal subunit. The protein is Ribosomal RNA large subunit methyltransferase E of Enterobacter sp. (strain 638).